The chain runs to 621 residues: Chaperone protein HscA homolog (621 aa).

Belongs to the heat shock protein 70 family.

Functionally, chaperone involved in the maturation of iron-sulfur cluster-containing proteins. Has a low intrinsic ATPase activity which is markedly stimulated by HscB. This chain is Chaperone protein HscA homolog, found in Cupriavidus taiwanensis (strain DSM 17343 / BCRC 17206 / CCUG 44338 / CIP 107171 / LMG 19424 / R1) (Ralstonia taiwanensis (strain LMG 19424)).